The primary structure comprises 368 residues: Isopentenyl-diphosphate delta-isomerase (368 aa).

Residue 7–8 (RK) coordinates substrate. FMN is bound by residues Thr-65, 66 to 68 (GMT), Ser-96, and Asn-125. 96-98 (SQR) is a binding site for substrate. Gln-160 lines the substrate pocket. Glu-161 contacts Mg(2+). Residues Lys-193, Ser-218, Thr-223, 275–277 (GIR), and 296–297 (AL) contribute to the FMN site.

It belongs to the IPP isomerase type 2 family. Homooctamer. Dimer of tetramers. FMN is required as a cofactor. The cofactor is NADPH. It depends on Mg(2+) as a cofactor.

The protein resides in the cytoplasm. The catalysed reaction is isopentenyl diphosphate = dimethylallyl diphosphate. Its function is as follows. Involved in the biosynthesis of isoprenoids. Catalyzes the 1,3-allylic rearrangement of the homoallylic substrate isopentenyl (IPP) to its allylic isomer, dimethylallyl diphosphate (DMAPP). The protein is Isopentenyl-diphosphate delta-isomerase of Saccharolobus islandicus (strain M.16.27) (Sulfolobus islandicus).